The sequence spans 188 residues: Protein GrpE 2 (188 aa).

This sequence belongs to the GrpE family. Homodimer.

The protein resides in the cytoplasm. In terms of biological role, participates actively in the response to hyperosmotic and heat shock by preventing the aggregation of stress-denatured proteins, in association with DnaK and GrpE. It is the nucleotide exchange factor for DnaK and may function as a thermosensor. Unfolded proteins bind initially to DnaJ; upon interaction with the DnaJ-bound protein, DnaK hydrolyzes its bound ATP, resulting in the formation of a stable complex. GrpE releases ADP from DnaK; ATP binding to DnaK triggers the release of the substrate protein, thus completing the reaction cycle. Several rounds of ATP-dependent interactions between DnaJ, DnaK and GrpE are required for fully efficient folding. The protein is Protein GrpE 2 of Buchnera aphidicola subsp. Acyrthosiphon pisum (strain APS) (Acyrthosiphon pisum symbiotic bacterium).